Here is a 363-residue protein sequence, read N- to C-terminus: Protein RecA (363 aa).

78–85 (GPESGGKT) is an ATP binding site.

It belongs to the RecA family.

It localises to the cytoplasm. Can catalyze the hydrolysis of ATP in the presence of single-stranded DNA, the ATP-dependent uptake of single-stranded DNA by duplex DNA, and the ATP-dependent hybridization of homologous single-stranded DNAs. It interacts with LexA causing its activation and leading to its autocatalytic cleavage. Probably involved in base excision repair. In terms of biological role, following severe irradiation (7 kGy of gamma irradiation) genomic DNA is fragmented. DNA is progressively degraded for the first 1.5 hours after IR, in a step promoted by RecA and counterbalanced by DNA Pol I and Pol III, followed by massive DNA synthesis and genome reassembly in the next hour. Optimal priming of DNA synthesis requires both RecA and RadA, Pol III initiates DNA synthesis while both Pol I and Pol III are required for its continuation. In the absence of RecA the majority of the chromosome is still reconstituted, via either single-strand annealing or non-homologous end joining. This Deinococcus radiodurans (strain ATCC 13939 / DSM 20539 / JCM 16871 / CCUG 27074 / LMG 4051 / NBRC 15346 / NCIMB 9279 / VKM B-1422 / R1) protein is Protein RecA.